The following is a 744-amino-acid chain: Phosphoribosylformylglycinamidine synthase subunit PurL (744 aa).

The active site involves H49. The ATP site is built by Y52 and K91. E93 contacts Mg(2+). Substrate is bound by residues 94–97 and R116; that span reads SHNH. H95 functions as the Proton acceptor in the catalytic mechanism. D117 lines the Mg(2+) pocket. A substrate-binding site is contributed by Q240. D268 is a binding site for Mg(2+). 312 to 314 is a binding site for substrate; that stretch reads ESQ. ATP-binding residues include D493 and G530. N531 contacts Mg(2+). S533 is a substrate binding site.

It belongs to the FGAMS family. Monomer. Part of the FGAM synthase complex composed of 1 PurL, 1 PurQ and 2 PurS subunits.

The protein resides in the cytoplasm. The enzyme catalyses N(2)-formyl-N(1)-(5-phospho-beta-D-ribosyl)glycinamide + L-glutamine + ATP + H2O = 2-formamido-N(1)-(5-O-phospho-beta-D-ribosyl)acetamidine + L-glutamate + ADP + phosphate + H(+). The protein operates within purine metabolism; IMP biosynthesis via de novo pathway; 5-amino-1-(5-phospho-D-ribosyl)imidazole from N(2)-formyl-N(1)-(5-phospho-D-ribosyl)glycinamide: step 1/2. In terms of biological role, part of the phosphoribosylformylglycinamidine synthase complex involved in the purines biosynthetic pathway. Catalyzes the ATP-dependent conversion of formylglycinamide ribonucleotide (FGAR) and glutamine to yield formylglycinamidine ribonucleotide (FGAM) and glutamate. The FGAM synthase complex is composed of three subunits. PurQ produces an ammonia molecule by converting glutamine to glutamate. PurL transfers the ammonia molecule to FGAR to form FGAM in an ATP-dependent manner. PurS interacts with PurQ and PurL and is thought to assist in the transfer of the ammonia molecule from PurQ to PurL. This is Phosphoribosylformylglycinamidine synthase subunit PurL from Nitrobacter hamburgensis (strain DSM 10229 / NCIMB 13809 / X14).